The chain runs to 392 residues: NADH-quinone oxidoreductase subunit D 1 (392 aa).

It belongs to the complex I 49 kDa subunit family. As to quaternary structure, NDH-1 is composed of 14 different subunits. Subunits NuoB, C, D, E, F, and G constitute the peripheral sector of the complex.

It is found in the cell inner membrane. The catalysed reaction is a quinone + NADH + 5 H(+)(in) = a quinol + NAD(+) + 4 H(+)(out). NDH-1 shuttles electrons from NADH, via FMN and iron-sulfur (Fe-S) centers, to quinones in the respiratory chain. The immediate electron acceptor for the enzyme in this species is believed to be a menaquinone. Couples the redox reaction to proton translocation (for every two electrons transferred, four hydrogen ions are translocated across the cytoplasmic membrane), and thus conserves the redox energy in a proton gradient. This Cytophaga hutchinsonii (strain ATCC 33406 / DSM 1761 / CIP 103989 / NBRC 15051 / NCIMB 9469 / D465) protein is NADH-quinone oxidoreductase subunit D 1.